A 319-amino-acid polypeptide reads, in one-letter code: L-lactate dehydrogenase (319 aa).

Residues valine 17, aspartate 38, lysine 43, tyrosine 69, and 83–84 (GA) contribute to the NAD(+) site. Substrate contacts are provided by residues glutamine 86, arginine 92, and 124–127 (NPVD). NAD(+)-binding positions include 122-124 (ATN) and serine 147. Substrate is bound at residue 152 to 155 (DTAR). 2 residues coordinate beta-D-fructose 1,6-bisphosphate: arginine 157 and histidine 172. Histidine 179 serves as the catalytic Proton acceptor. Tyrosine 224 carries the post-translational modification Phosphotyrosine. Position 233 (threonine 233) interacts with substrate.

It belongs to the LDH/MDH superfamily. LDH family. Homotetramer.

The protein localises to the cytoplasm. It catalyses the reaction (S)-lactate + NAD(+) = pyruvate + NADH + H(+). The protein operates within fermentation; pyruvate fermentation to lactate; (S)-lactate from pyruvate: step 1/1. With respect to regulation, allosterically activated by fructose 1,6-bisphosphate (FBP). Catalyzes the conversion of lactate to pyruvate. The protein is L-lactate dehydrogenase of Bacillus licheniformis (strain ATCC 14580 / DSM 13 / JCM 2505 / CCUG 7422 / NBRC 12200 / NCIMB 9375 / NCTC 10341 / NRRL NRS-1264 / Gibson 46).